Consider the following 372-residue polypeptide: Protein zntB (372 aa).

The next 3 helical transmembrane spans lie at Leu15–Ile35, Leu42–Leu62, and Ile70–Leu90. The disordered stretch occupies residues Glu99 to Ser166. The segment covering Ile114–Val124 has biased composition (basic and acidic residues). Residues Asn133–Lys167 are a coiled coil. The span at Lys137–Gln146 shows a compositional bias: basic residues. Residues Gln147–Lys159 show a composition bias toward low complexity. 5 helical membrane-spanning segments follow: residues Tyr170–Ala192, Leu207–Ala229, Phe237–Ile257, Leu271–Phe291, and Phe301–Leu321. Residues Ala328–Ala372 are disordered. Residues Gly334 to Gly352 are compositionally biased toward basic residues. Polar residues predominate over residues Val360–Ala372.

Belongs to the ZIP transporter (TC 2.A.5) family. ZupT subfamily.

The protein localises to the membrane. In terms of biological role, may transport divalent cations. May participate, with dstA, in the regulation of the differentiation of stalk cells during development. The protein is Protein zntB (zntB) of Dictyostelium discoideum (Social amoeba).